Reading from the N-terminus, the 1040-residue chain is Multidrug resistance protein MdtB (1040 aa).

12 helical membrane-spanning segments follow: residues 16-36 (FIMR…AGII), 347-367 (LMMA…NIPA), 369-389 (IIPG…MVFL), 396-416 (LTLM…IVVI), 440-460 (IGFT…PLLF), 472-492 (FAIT…TLTP), 537-557 (WLTL…WVFI), 863-883 (LGST…VLGI), 888-908 (FIHP…ALLA), 911-931 (IAGS…IGIV), 968-988 (ILMT…STGV), and 998-1018 (IGMV…TPVI).

It belongs to the resistance-nodulation-cell division (RND) (TC 2.A.6) family. MdtB subfamily. In terms of assembly, part of a tripartite efflux system composed of MdtA, MdtB and MdtC. MdtB forms a heteromultimer with MdtC.

It localises to the cell inner membrane. Its function is as follows. The MdtABC tripartite complex confers resistance against novobiocin and deoxycholate. This chain is Multidrug resistance protein MdtB, found in Escherichia fergusonii (strain ATCC 35469 / DSM 13698 / CCUG 18766 / IAM 14443 / JCM 21226 / LMG 7866 / NBRC 102419 / NCTC 12128 / CDC 0568-73).